We begin with the raw amino-acid sequence, 234 residues long: Opacity protein opA56 (234 aa).

Residue A1 is a signal peptide.

It belongs to the opacity porin family.

It localises to the cell outer membrane. Implicated in a number of adherence functions. OPA proteins are implicated in pathogenesis and are subject to phase variation. In Neisseria gonorrhoeae, this protein is Opacity protein opA56 (opaF).